Here is a 236-residue protein sequence, read N- to C-terminus: Uridylate kinase (236 aa).

ATP is bound at residue 12–15; that stretch reads KLSG. The involved in allosteric activation by GTP stretch occupies residues 20-25; it reads GEKGFG. Gly54 serves as a coordination point for UMP. Positions 55 and 59 each coordinate ATP. Residues Asp72 and 133 to 140 each bind UMP; that span reads TGNPYFST. Asn161, Tyr166, and Asp169 together coordinate ATP.

Belongs to the UMP kinase family. Homohexamer.

It is found in the cytoplasm. The enzyme catalyses UMP + ATP = UDP + ADP. Its pathway is pyrimidine metabolism; CTP biosynthesis via de novo pathway; UDP from UMP (UMPK route): step 1/1. Allosterically activated by GTP. Inhibited by UTP. Catalyzes the reversible phosphorylation of UMP to UDP. The chain is Uridylate kinase from Alkaliphilus oremlandii (strain OhILAs) (Clostridium oremlandii (strain OhILAs)).